A 235-amino-acid chain; its full sequence is CMP-N,N'-diacetyllegionaminic acid synthase (235 aa).

Belongs to the CMP-NeuNAc synthase family.

It carries out the reaction N,N-diacetyllegionaminate + CTP = CMP-N,N-diacetyllegionaminate + diphosphate. In terms of biological role, involved in biosynthesis of legionaminic acid (5,7-diamino-3,5,7,9-tetradeoxy-D-glycero-D-galacto-non-2-ulosonic acid)(Leg), a sialic acid-like derivative that is incorporated into flagellin via O-linkage to Ser/Thr. Catalyzes the conversion of N,N'-diacetyllegionaminic acid (Leg5Ac7Ac) and CTP into CMP-N,N'-diacetyllegionaminic acid (CMP-Leg5Ac7Ac). The polypeptide is CMP-N,N'-diacetyllegionaminic acid synthase (legF) (Campylobacter jejuni subsp. jejuni serotype O:2 (strain ATCC 700819 / NCTC 11168)).